The following is an 81-amino-acid chain: Acylphosphatase (81 aa).

Residues 1–81 (MYIFHGRVQG…VKYNDFQIRY (81 aa)) form the Acylphosphatase-like domain. Catalysis depends on residues Arg14 and Asn32.

Belongs to the acylphosphatase family.

The enzyme catalyses an acyl phosphate + H2O = a carboxylate + phosphate + H(+). This Picrophilus torridus (strain ATCC 700027 / DSM 9790 / JCM 10055 / NBRC 100828 / KAW 2/3) protein is Acylphosphatase (acyP).